The chain runs to 291 residues: 33 kDa chaperonin (291 aa).

Intrachain disulfides connect C229–C231 and C262–C265.

It belongs to the HSP33 family. Post-translationally, under oxidizing conditions two disulfide bonds are formed involving the reactive cysteines. Under reducing conditions zinc is bound to the reactive cysteines and the protein is inactive.

The protein resides in the cytoplasm. Functionally, redox regulated molecular chaperone. Protects both thermally unfolding and oxidatively damaged proteins from irreversible aggregation. Plays an important role in the bacterial defense system toward oxidative stress. This Vibrio cholerae serotype O1 (strain ATCC 39315 / El Tor Inaba N16961) protein is 33 kDa chaperonin.